A 386-amino-acid polypeptide reads, in one-letter code: Phosphoglycerate kinase (386 aa).

Substrate-binding positions include 21–23 (DLN), R36, 59–62 (HLGR), R112, and R145. ATP-binding positions include K196, E313, and 339 to 342 (GGDT).

It belongs to the phosphoglycerate kinase family. Monomer.

It is found in the cytoplasm. The catalysed reaction is (2R)-3-phosphoglycerate + ATP = (2R)-3-phospho-glyceroyl phosphate + ADP. It functions in the pathway carbohydrate degradation; glycolysis; pyruvate from D-glyceraldehyde 3-phosphate: step 2/5. This is Phosphoglycerate kinase (pgk) from Haemophilus influenzae (strain ATCC 51907 / DSM 11121 / KW20 / Rd).